Reading from the N-terminus, the 373-residue chain is MFSAQKPIYGNGAGVNMGGGGPSTNNPGSMSMPGVPTSMGPGMNQQIPSGGPMLMGNTPNNNNSNENGENNGNNGNNGGNDANATRNNPNMVNNRGAVHALDDPNVYHWICQLTYGPQKEQALLELGRKREQFDDLAVVLWSSFGVMTSLLNEIISVYPMLQPQMLSNNLSNRVCNALVLLQCVASHPETKHLFLQAHIPLFLFPFLNTTSRQRTFEYLRLTSLGVIGALVKNDSQDVITFLLRTDIVPLCLRIMESSSELSKTVAIFILQKILLDDVGLQYICATLERFYAVTNVLKDMVEHLTVSTPPGRLLKHIIRCYLRLSDDLEARRLLKIVLPAKLRDNTFTEVLRDDVGSKRCLAQLLLTLNEETS.

Residues 1 to 91 (MFSAQKPIYG…ANATRNNPNM (91 aa)) are disordered. The span at 11 to 22 (NGAGVNMGGGGP) shows a compositional bias: gly residues. Positions 50 to 88 (GGPMLMGNTPNNNNSNENGENNGNNGNNGGNDANATRNN) are enriched in low complexity.

Belongs to the CNOT9 family. Subunit of the 1.0 MDa CCR4-NOT core complex that contains CCR4, CAF1, NOT1, NOT2, NOT3, NOT4, NOT5, CAF40 and CAF130. In the complex interacts with NOT1. The core complex probably is part of a less characterized 1.9 MDa CCR4-NOT complex.

It is found in the cytoplasm. Its subcellular location is the nucleus. Functionally, acts as a component of the CCR4-NOT core complex, which in the nucleus seems to be a general transcription factor, and in the cytoplasm the major mRNA deadenylase involved in mRNA turnover. The protein is Protein CAF40 (CAF40) of Saccharomyces cerevisiae (strain ATCC 204508 / S288c) (Baker's yeast).